The sequence spans 249 residues: MRIIPAIDLKDGQCVRLFKGDMDQNTVYSDNPGETAKQWAEQGAERMHVVDLNGAFAGEPVNADAIAAIRKAITIPMQLGGGIRTLETLQKLFNLGVDFAILGSVAARDPELVFRACEQFPGRISVGIDARDGKVAVEGWAETTDLNAVDLAKKFEDAGVAEIIFTDIARDGTLTGPNVAATRLMAESATIPVIASGGVSCLADIQALLENSGPYPNGNRISGVITGKAIYDGRLDLAAAIALSRRWEN.

The Proton acceptor role is filled by aspartate 8. Aspartate 129 acts as the Proton donor in catalysis.

The protein belongs to the HisA/HisF family.

The protein resides in the cytoplasm. The catalysed reaction is 1-(5-phospho-beta-D-ribosyl)-5-[(5-phospho-beta-D-ribosylamino)methylideneamino]imidazole-4-carboxamide = 5-[(5-phospho-1-deoxy-D-ribulos-1-ylimino)methylamino]-1-(5-phospho-beta-D-ribosyl)imidazole-4-carboxamide. The protein operates within amino-acid biosynthesis; L-histidine biosynthesis; L-histidine from 5-phospho-alpha-D-ribose 1-diphosphate: step 4/9. The protein is 1-(5-phosphoribosyl)-5-[(5-phosphoribosylamino)methylideneamino] imidazole-4-carboxamide isomerase of Magnetococcus marinus (strain ATCC BAA-1437 / JCM 17883 / MC-1).